The primary structure comprises 95 residues: Aspartyl/glutamyl-tRNA(Asn/Gln) amidotransferase subunit C (95 aa).

The protein belongs to the GatC family. As to quaternary structure, heterotrimer of A, B and C subunits.

The catalysed reaction is L-glutamyl-tRNA(Gln) + L-glutamine + ATP + H2O = L-glutaminyl-tRNA(Gln) + L-glutamate + ADP + phosphate + H(+). It carries out the reaction L-aspartyl-tRNA(Asn) + L-glutamine + ATP + H2O = L-asparaginyl-tRNA(Asn) + L-glutamate + ADP + phosphate + 2 H(+). In terms of biological role, allows the formation of correctly charged Asn-tRNA(Asn) or Gln-tRNA(Gln) through the transamidation of misacylated Asp-tRNA(Asn) or Glu-tRNA(Gln) in organisms which lack either or both of asparaginyl-tRNA or glutaminyl-tRNA synthetases. The reaction takes place in the presence of glutamine and ATP through an activated phospho-Asp-tRNA(Asn) or phospho-Glu-tRNA(Gln). This Geobacter sp. (strain M21) protein is Aspartyl/glutamyl-tRNA(Asn/Gln) amidotransferase subunit C.